The chain runs to 969 residues: Protein translocase subunit SecA (969 aa).

Residues Gln99, 117–121 (GEGKT), and Asp631 contribute to the ATP site.

It belongs to the SecA family. Monomer and homodimer. Part of the essential Sec protein translocation apparatus which comprises SecA, SecYEG and auxiliary proteins SecDF. Other proteins may also be involved.

The protein localises to the cell inner membrane. It is found in the cytoplasm. It carries out the reaction ATP + H2O + cellular proteinSide 1 = ADP + phosphate + cellular proteinSide 2.. In terms of biological role, part of the Sec protein translocase complex. Interacts with the SecYEG preprotein conducting channel. Has a central role in coupling the hydrolysis of ATP to the transfer of proteins into and across the cell membrane, serving as an ATP-driven molecular motor driving the stepwise translocation of polypeptide chains across the membrane. The chain is Protein translocase subunit SecA from Chlamydia abortus (strain DSM 27085 / S26/3) (Chlamydophila abortus).